Reading from the N-terminus, the 94-residue chain is MNIKPLGDRVVIKRVEAEETTKSGIVLPGSAKEQPQLAEVMAVGPGGVIEGKEVVMEVKVGDKVIFSKYAGTEVKFDGVEYTILKQSDILAVVE.

This sequence belongs to the GroES chaperonin family. In terms of assembly, heptamer of 7 subunits arranged in a ring. Interacts with the chaperonin GroEL.

Its subcellular location is the cytoplasm. Functionally, together with the chaperonin GroEL, plays an essential role in assisting protein folding. The GroEL-GroES system forms a nano-cage that allows encapsulation of the non-native substrate proteins and provides a physical environment optimized to promote and accelerate protein folding. GroES binds to the apical surface of the GroEL ring, thereby capping the opening of the GroEL channel. This chain is Co-chaperonin GroES, found in Alkaliphilus oremlandii (strain OhILAs) (Clostridium oremlandii (strain OhILAs)).